A 432-amino-acid chain; its full sequence is Protein ABHD8 (432 aa).

Disordered regions lie at residues 47 to 69 (KHAG…QGDQ) and 121 to 149 (PAGS…RPKR). A compositionally biased stretch (pro residues) spans 52-61 (APAPTPPPPL). Residues 139 to 149 (GRRRRARRPKR) show a composition bias toward basic residues. Residues 170 to 272 (VLFFIHGVGG…HKVIMINGGG (103 aa)) enclose the AB hydrolase-1 domain. Catalysis depends on charge relay system residues serine 245, aspartate 363, and histidine 391.

It belongs to the AB hydrolase superfamily. Interacts with NLRP3 (via NACHT and LLR domains); this interaction is enhanced in the presence of NLRP3 inflammasome inducers, such as ATP, nigericin, silica, or alum. Interacts with ZDHHC12.

The protein resides in the cytoplasm. Its function is as follows. Negatively regulates NLRP3-driven inflammation. Promotes NLRP3 degradation through the chaperone-mediated autophagy (CMA) pathway, hence attenuating inflammasome activation and IL1B secretion. Acts by recruiting palmitoyltransferase ZDHHC12 to NLRP3, facilitating NLRP3 palmitoylation and subsequent degradation. The protein is Protein ABHD8 of Bos taurus (Bovine).